A 288-amino-acid polypeptide reads, in one-letter code: Polyamine aminopropyltransferase (288 aa).

A PABS domain is found at 9–238 (ETLHDQFGQY…GIMTFAWATD (230 aa)). Glutamine 33 serves as a coordination point for S-methyl-5'-thioadenosine. Positions 64 and 88 each coordinate spermidine. S-methyl-5'-thioadenosine-binding positions include glutamate 108 and 140-141 (DG). The Proton acceptor role is filled by aspartate 158. 158–161 (DCTD) provides a ligand contact to spermidine. Proline 165 provides a ligand contact to S-methyl-5'-thioadenosine.

Belongs to the spermidine/spermine synthase family. In terms of assembly, homodimer or homotetramer.

It localises to the cytoplasm. The catalysed reaction is S-adenosyl 3-(methylsulfanyl)propylamine + putrescine = S-methyl-5'-thioadenosine + spermidine + H(+). The protein operates within amine and polyamine biosynthesis; spermidine biosynthesis; spermidine from putrescine: step 1/1. Functionally, catalyzes the irreversible transfer of a propylamine group from the amino donor S-adenosylmethioninamine (decarboxy-AdoMet) to putrescine (1,4-diaminobutane) to yield spermidine. This chain is Polyamine aminopropyltransferase, found in Escherichia fergusonii (strain ATCC 35469 / DSM 13698 / CCUG 18766 / IAM 14443 / JCM 21226 / LMG 7866 / NBRC 102419 / NCTC 12128 / CDC 0568-73).